The following is a 400-amino-acid chain: Exodeoxyribonuclease 7 large subunit (400 aa).

This sequence belongs to the XseA family. In terms of assembly, heterooligomer composed of large and small subunits.

It is found in the cytoplasm. It catalyses the reaction Exonucleolytic cleavage in either 5'- to 3'- or 3'- to 5'-direction to yield nucleoside 5'-phosphates.. Functionally, bidirectionally degrades single-stranded DNA into large acid-insoluble oligonucleotides, which are then degraded further into small acid-soluble oligonucleotides. This chain is Exodeoxyribonuclease 7 large subunit, found in Clostridium kluyveri (strain NBRC 12016).